The following is a 307-amino-acid chain: Delta-9 acyl-lipid desaturase 2 (307 aa).

A compositionally biased stretch (polar residues) spans 1-17; the sequence is MSVTSTVEENHQKNPST. A disordered region spans residues 1 to 21; the sequence is MSVTSTVEENHQKNPSTPAAV. Residues 53–73 traverse the membrane as a helical segment; sequence LALLAPFYFTWSALWVTFLFY. Residues His85 and His90 each coordinate Fe cation. The short motif at 85–90 is the Histidine box-1 element; the sequence is HRNLAH. The helical transmembrane segment at 99–119 threads the bilayer; that stretch reads LEYLLAYCALLAIQGDPIDWV. Fe cation contacts are provided by His122, His125, and His126. A Histidine box-2 motif is present at residues 122–126; the sequence is HRYHH. 2 helical membrane-spanning segments follow: residues 182-202 and 204-224; these read VLFHILGLGFFLFYLGGMSFV and WGMGVGAALEVHVTCLINSLC. Fe cation contacts are provided by His225, His254, His257, and His258. The Histidine box-3 motif lies at 254–258; it reads HNNHH.

It belongs to the fatty acid desaturase type 1 family. Requires Fe cation as cofactor. As to expression, strongly expressed in flowers, roots, leaves, seedpods, and inflorescence meristems.

It localises to the endoplasmic reticulum membrane. The enzyme catalyses a 1-hexacosanoyl-2-acyl-phosphoglycerolipid + 2 Fe(II)-[cytochrome b5] + O2 + 2 H(+) = a 1-[(17Z)-hexacos-17-enoyl]-2-acyl-phosphoglycerolipid + 2 Fe(III)-[cytochrome b5] + 2 H2O. The catalysed reaction is a 1-tetracosanoyl-2-acyl-phosphoglycerolipid + 2 Fe(II)-[cytochrome b5] + O2 + 2 H(+) = a 1-[(15Z)-tetracos-15-enoyl]-2-acyl-phosphoglycerolipid + 2 Fe(III)-[cytochrome b5] + 2 H2O. It functions in the pathway lipid metabolism; polyunsaturated fatty acid biosynthesis. Involved in delta-9 desaturation of fatty acids. Plays a role in the production of very-long-chain monounsaturated fatty acids (VLCMUFAs) in seed lipids and in membrane phospholipids and sphingolipids. Acts as C-16:0 desaturase for monogalactosyl diacylglycerol (MGDG) and phosphatidylglycerol (PG). Is an essential component for cold adaptation. Is essential to adjust the acyl composition of organelle membrane lipid composition in response to cold stress. This Arabidopsis thaliana (Mouse-ear cress) protein is Delta-9 acyl-lipid desaturase 2.